The sequence spans 108 residues: Protein U4 (108 aa).

Residues 5 to 25 traverse the membrane as a helical segment; the sequence is FLLFSLLFVVFLQPALVFNMV.

Belongs to the nanovirus U4 protein family.

Its subcellular location is the membrane. The sequence is that of Protein U4 (DNA-U4) from Astragalus sinicus (Chinese milk vetch).